The chain runs to 122 residues: Elsinochromes biosynthesis cluster protein HP4 (122 aa).

Its function is as follows. Part of the gene cluster that mediates the biosynthesis of elsinochromes, pigments consisting of at least four interconvertible tautomers (A, B, C and D) that have a core phenolic quinone to which various side chains are attached and which play an important role in fungal pathogenesis. The non-reducing polyketide synthase PKS1 was proposed to iteratively catalyze decarboxylation between acetyl-CoA and malonyl-CoA subunits for polyketide chain elongation. The released polyketide undergoes cyclization to form an aromatic ring, and proceeds via serial modification steps to produce the heptaketide back- bone of elsinochrome. As elsinochrome has a symmetrical structure, two identical heptaketides are fused to form a core 1,2-dihydrobenzo-perylene ring structure, which can then be successively modified to produce the various derivatives of elsinochrome. Some of these reactions may be cooperatively carried out, at least in part, by the products of RDT1, OXR1 and PKS1. PRF1, embedded within the elsinochrome cluster possibly functions to stabilize some of the biosynthetic enzymes required for elsinochrome production. As prefoldin is a hexamer containing 2 a and 4 b subunits, additional prefoldin subunits, whose coding genes may not immediately link to the elsinochrome biosynthetic gene cluster, are required to fulfill the chaperone function. In addition, no methyltransferase-coding gene exists within the biosynthetic gene cluster, even though elsinochrome has four methyl groups at positions C3, C7, C8 and C12. Apparently, the identified gene cluster does not contain the entire entourage of genes responsible for elsinochrome biosynthesis. Once elsinochrome is synthesized, it must be exported outside the fungal cells, which is probably accomplished by the ECT1 transporter, to avoid toxicity. This is Elsinochromes biosynthesis cluster protein HP4 from Elsinoe fawcettii (Citrus scab fungus).